Consider the following 966-residue polypeptide: MSSATSPIILKWDPKSLEIRTLTVESLLEPLVTQVTTLVNTSNKGPSGKKKGRSKKAHVLAASVEQATQNFLEKGEQIAKESQDLKDELISAVEDVRKQGETMRIASSEFADDPCSSVKRGTMVRAARALLSAVTRLLILADMADVMRLLTHLKIVEEALEMVKNATNEQDLAHRFKEFGKEMVKLNYVAARRQQELKDPHCRDEMAAARGALKKNATMLYTASQAFLRHSDVAATRANRDYVFKQVQEAIAGISNAAQATSPTDEKQAHTGIGELAAALNEFDNKIILDPLTFSEARFRPSLEERLESIISGAALMADSSCTRDDRRERIVAECNSVRQALQDLLSEYMNNCRYGTWMDESSKSGRKEKGDPLNIAIDKMTKKTRDLRRQLRKAVMDHISDSFLETNVPLLVLIEAAKSGNEKEVKEYAQVFREHANKLVEVANLACSISNNEEGVKLVRMAATQIDSLCPQVINAALTLAARPQSKVAQDNMDVFKDQWEKQVRVLTEAVDDITSVDDFLSVSENHILEDVNKCVIALQEGDVDTLDRTAGAIRGRAARVIHIINAEMENYEAGVYTEKVLETTKLLSETVMPRFAEQVEVAIEALSTNIPQPFEENEFIDASRLVYDGVRDIRKAVLMIRTPEELEDDSDFEQEDYDVRSRTSVQTEDDQLIAGQSARAIMAQLPQEEKAKIAEQVEIFHQEKSKLDAEVAKWDDSGNDIIVLAKQMCMIMMEMTDFTRGKGPLKNTSDVINAAKKIAEAGSRMDKLARAVADQCPDSACKQDLLAYLQRIALYCHQLNICSKVKAEVQNLGGELIVSGTGVQSTFTTFYEVAGDVIAGGRDSQLSLDLLPSCTEGSLFGSGSRDSTMLDSATSLIQAAKNLMNAVVLTVKASYVASTKYQKVYGTAAVNSPVVSWKMKAPEKKPLVKREKPEEYQTRVRRGSQKKHISPVQALSEFKAMDSF.

The span at 924 to 940 shows a compositional bias: basic and acidic residues; it reads PEKKPLVKREKPEEYQT. The interval 924 to 952 is disordered; that stretch reads PEKKPLVKREKPEEYQTRVRRGSQKKHIS. Basic residues predominate over residues 941 to 951; it reads RVRRGSQKKHI.

Belongs to the vinculin/alpha-catenin family.

It is found in the cell membrane. The protein resides in the cytoplasm. It localises to the cytoskeleton. Its subcellular location is the cell junction. The protein localises to the adherens junction. It is found in the cell projection. The protein resides in the axon. It localises to the nucleus. Functionally, may function as a linker between cadherin adhesion receptors and the cytoskeleton to regulate cell-cell adhesion and differentiation in the nervous system. The polypeptide is Catenin alpha-2 (ctnna2) (Xenopus laevis (African clawed frog)).